The sequence spans 103 residues: Glycoprotein 24B (103 aa).

Belongs to the csb family. O-glycosylated.

The protein resides in the cell surface. Cell-cell adhesion during early development. The protein is Glycoprotein 24B (csbB) of Dictyostelium discoideum (Social amoeba).